The primary structure comprises 237 residues: 1-(5-phosphoribosyl)-5-[(5-phosphoribosylamino)methylideneamino] imidazole-4-carboxamide isomerase (237 aa).

Asp-8 (proton acceptor) is an active-site residue. The active-site Proton donor is the Asp-129.

Belongs to the HisA/HisF family.

It localises to the cytoplasm. The catalysed reaction is 1-(5-phospho-beta-D-ribosyl)-5-[(5-phospho-beta-D-ribosylamino)methylideneamino]imidazole-4-carboxamide = 5-[(5-phospho-1-deoxy-D-ribulos-1-ylimino)methylamino]-1-(5-phospho-beta-D-ribosyl)imidazole-4-carboxamide. The protein operates within amino-acid biosynthesis; L-histidine biosynthesis; L-histidine from 5-phospho-alpha-D-ribose 1-diphosphate: step 4/9. This is 1-(5-phosphoribosyl)-5-[(5-phosphoribosylamino)methylideneamino] imidazole-4-carboxamide isomerase from Acetivibrio thermocellus (strain ATCC 27405 / DSM 1237 / JCM 9322 / NBRC 103400 / NCIMB 10682 / NRRL B-4536 / VPI 7372) (Clostridium thermocellum).